Consider the following 437-residue polypeptide: GTPase Era, mitochondrial (437 aa).

A mitochondrion-targeting transit peptide spans 1–20 (MAAPRRYFPGIVRALLGAWQ). Positions 112-330 (RVLRVVLLGA…QYLLTQAQPG (219 aa)) constitute an Era-type G domain. The interval 120 to 127 (GAPNAGKS) is G1. 120 to 127 (GAPNAGKS) contacts GTP. The interval 146–150 (HTTRC) is G2. The segment at 167-170 (DTPG) is G3. 167 to 171 (DTPGI) provides a ligand contact to GTP. The residue at position 173 (S173) is a Phosphoserine. 236–239 (NKVD) contributes to the GTP binding site. The interval 236 to 239 (NKVD) is G4. Positions 272-293 (SRPSTHCPGPETEDPNTHAVRS) are disordered. The interval 308–310 (LSA) is G5. Residues 360-437 (LPEEVPYSVQ…LLRLSVKLLK (78 aa)) enclose the KH type-2 domain.

This sequence belongs to the TRAFAC class TrmE-Era-EngA-EngB-Septin-like GTPase superfamily. Era GTPase family.

The protein localises to the mitochondrion matrix. It is found in the mitochondrion inner membrane. In terms of biological role, probable GTPase that plays a role in the mitochondrial ribosomal small subunit assembly. Specifically binds the 12S mitochondrial rRNA (12S mt-rRNA) to a 33 nucleotide section delineating the 3' terminal stem-loop region. May act as a chaperone that protects the 12S mt-rRNA on the 28S mitoribosomal subunit during ribosomal small subunit assembly. The protein is GTPase Era, mitochondrial (Eral1) of Rattus norvegicus (Rat).